A 182-amino-acid chain; its full sequence is MVQEKAEIMDQEKFNRTLTRISHEIIEKNKGIDDLVLIGIRTRGVPLAERLAHKIEEIEGESIATGLLDITLYRDDLSTLSEKPILNKTEVPFSIKNKKVVLVDDVLYTGRTARAALDAVIDLGRPKYIQLAVIVDRGHRELPIRADYVGKNVPTSKKELISVRLSEIDGEDRVMIEETVKE.

The short motif at 100 to 112 is the PRPP-binding element; that stretch reads VVLVDDVLYTGRT.

The protein belongs to the purine/pyrimidine phosphoribosyltransferase family. PyrR subfamily. As to quaternary structure, homodimer and homohexamer; in equilibrium.

It carries out the reaction UMP + diphosphate = 5-phospho-alpha-D-ribose 1-diphosphate + uracil. Functionally, regulates transcriptional attenuation of the pyrimidine nucleotide (pyr) operon by binding in a uridine-dependent manner to specific sites on pyr mRNA. This disrupts an antiterminator hairpin in the RNA and favors formation of a downstream transcription terminator, leading to a reduced expression of downstream genes. Also displays a weak uracil phosphoribosyltransferase activity which is not physiologically significant. This is Bifunctional protein PyrR from Natranaerobius thermophilus (strain ATCC BAA-1301 / DSM 18059 / JW/NM-WN-LF).